Here is a 344-residue protein sequence, read N- to C-terminus: Aurora kinase B (344 aa).

Position 35 is a phosphothreonine (Thr35). The interval 46–65 (NAQPTAAPGQKVVENSSGTP) is disordered. Phosphoserine is present on Ser62. The residue at position 64 (Thr64) is a Phosphothreonine. The 251-residue stretch at 77–327 (FEIGRPLGKG…LAQVSAHPWV (251 aa)) folds into the Protein kinase domain. ATP contacts are provided by residues 83–91 (LGKGKFGNV) and Lys106. The active-site Proton acceptor is Asp200. Lys215 carries the post-translational modification N6-acetyllysine. At Ser227 the chain carries Phosphoserine. Thr232 bears the Phosphothreonine; by autocatalysis mark.

This sequence belongs to the protein kinase superfamily. Ser/Thr protein kinase family. Aurora subfamily. As to quaternary structure, component of the chromosomal passenger complex (CPC) composed of at least BIRC5/survivin, CDCA8/borealin, INCENP, AURKB or AURKC; predominantly independent AURKB- and AURKC-containing complexes exist. Associates with RACGAP1 during M phase. Interacts with SPDYC; this interaction may be required for proper localization of active, Thr-232-phosphorylated AURKB form during prometaphase and metaphase. Interacts with p53/TP53. Interacts (via the middle kinase domain) with NOC2L (via the N- and C-terminus domains). Interacts with CDCA1. Interacts with EVI5. Interacts with JTB. Interacts with NDC80. Interacts with PSMA3. Interacts with RNF2/RING1B. Interacts with SEPTIN1. Interacts with SIRT2. Interacts with TACC1. Interacts with TTC28. Post-translationally, the phosphorylation of Thr-232 requires the binding to INCENP and occurs by means of an autophosphorylation mechanism. Thr-232 phosphorylation is indispensable for the AURKB kinase activity. Acetylated at Lys-215 by KAT5 at kinetochores, increasing AURKB activity and promoting accurate chromosome segregation in mitosis. In terms of processing, ubiquitinated by different BCR (BTB-CUL3-RBX1) E3 ubiquitin ligase complexes. Ubiquitinated by the BCR(KLHL9-KLHL13) E3 ubiquitin ligase complex, ubiquitination leads to removal from mitotic chromosomes and is required for cytokinesis. During anaphase, the BCR(KLHL21) E3 ubiquitin ligase complex recruits the CPC complex from chromosomes to the spindle midzone and mediates the ubiquitination of AURKB. Ubiquitination of AURKB by BCR(KLHL21) E3 ubiquitin ligase complex may not lead to its degradation by the proteasome. Deubiquitinated by USP35; inhibiting CDH1-mediated degradation of AURKB.

The protein resides in the nucleus. It localises to the chromosome. It is found in the centromere. The protein localises to the kinetochore. Its subcellular location is the cytoplasm. The protein resides in the cytoskeleton. It localises to the spindle. It is found in the midbody. It catalyses the reaction L-seryl-[protein] + ATP = O-phospho-L-seryl-[protein] + ADP + H(+). The enzyme catalyses L-threonyl-[protein] + ATP = O-phospho-L-threonyl-[protein] + ADP + H(+). Its activity is regulated as follows. Activity is greatly increased when AURKB is within the CPC complex. In particular, AURKB-phosphorylated INCENP acts as an activator of AURKB. Positive feedback between HASPIN and AURKB contributes to CPC localization. Its function is as follows. Serine/threonine-protein kinase component of the chromosomal passenger complex (CPC), a complex that acts as a key regulator of mitosis. The CPC complex has essential functions at the centromere in ensuring correct chromosome alignment and segregation and is required for chromatin-induced microtubule stabilization and spindle assembly. Involved in the bipolar attachment of spindle microtubules to kinetochores and is a key regulator for the onset of cytokinesis during mitosis. Required for central/midzone spindle assembly and cleavage furrow formation. Key component of the cytokinesis checkpoint, a process required to delay abscission to prevent both premature resolution of intercellular chromosome bridges and accumulation of DNA damage: phosphorylates CHMP4C, leading to retain abscission-competent VPS4 (VPS4A and/or VPS4B) at the midbody ring until abscission checkpoint signaling is terminated at late cytokinesis. AURKB phosphorylates the CPC complex subunits BIRC5/survivin, CDCA8/borealin and INCENP. Phosphorylation of INCENP leads to increased AURKB activity. Other known AURKB substrates involved in centromeric functions and mitosis are CENPA, DES/desmin, GPAF, KIF2C, NSUN2, RACGAP1, SEPTIN1, VIM/vimentin, HASPIN, and histone H3. A positive feedback loop involving HASPIN and AURKB contributes to localization of CPC to centromeres. Phosphorylation of VIM controls vimentin filament segregation in cytokinetic process, whereas histone H3 is phosphorylated at 'Ser-10' and 'Ser-28' during mitosis (H3S10ph and H3S28ph, respectively). AURKB is also required for kinetochore localization of BUB1 and SGO1. Phosphorylation of p53/TP53 negatively regulates its transcriptional activity. Key regulator of active promoters in resting B- and T-lymphocytes: acts by mediating phosphorylation of H3S28ph at active promoters in resting B-cells, inhibiting RNF2/RING1B-mediated ubiquitination of histone H2A and enhancing binding and activity of the USP16 deubiquitinase at transcribed genes. Acts as an inhibitor of CGAS during mitosis: catalyzes phosphorylation of the N-terminus of CGAS during the G2-M transition, blocking CGAS liquid phase separation and activation, and thereby preventing CGAS-induced autoimmunity. Phosphorylates KRT5 during anaphase and telophase. Phosphorylates ATXN10 which promotes phosphorylation of ATXN10 by PLK1 and may play a role in the regulation of cytokinesis and stimulating the proteasomal degradation of ATXN10. This chain is Aurora kinase B (AURKB), found in Bos taurus (Bovine).